A 160-amino-acid polypeptide reads, in one-letter code: Protein max (160 aa).

Residues 1 to 13 (MSDNDDIEVESDE) are compositionally biased toward acidic residues. The disordered stretch occupies residues 1-40 (MSDNDDIEVESDEEQPRFQSAADKRAHHNALERKRRDHIK). At S2 the chain carries N-acetylserine. S2 and S11 each carry phosphoserine. A bHLH domain is found at 23–74 (DKRAHHNALERKRRDHIKDSFHSLRDSVPSLQGEKASRAQILDKATEYIQYM). The span at 29-40 (NALERKRRDHIK) shows a compositional bias: basic and acidic residues. N6-acetyllysine is present on K66. The segment at 81–102 (HQQDIDDLKRQNALLEQQVRAL) is leucine-zipper. The interval 105-160 (ARSSAQLQTNYPSSDNSLYTNAKGGTISAFDGGSDSSSESEPEEPQNRKKLRMEAS) is disordered. The residue at position 107 (S107) is a Phosphoserine. Residues 107–124 (SSAQLQTNYPSSDNSLYT) are compositionally biased toward polar residues. N6-acetyllysine is present on residues K153 and K154.

It belongs to the MAX family. As to quaternary structure, efficient DNA binding requires dimerization with another bHLH protein. Binds DNA as a heterodimer with MYC or MAD. Part of the E2F6.com-1 complex in G0 phase composed of E2F6, MGA, MAX, TFDP1, CBX3, BAT8, EUHMTASE1, RING1, RNF2, MBLR, L3MBTL2 and YAF2. Component of some MLL1/MLL complex, at least composed of the core components KMT2A/MLL1, ASH2L, HCFC1/HCF1, WDR5 and RBBP5, as well as the facultative components BACC1, CHD8, E2F6, HSP70, INO80C, KANSL1, LAS1L, MAX, MCRS1, MGA, MYST1/MOF, PELP1, PHF20, PRP31, RING2, RUVB1/TIP49A, RUVB2/TIP49B, SENP3, TAF1, TAF4, TAF6, TAF7, TAF9 and TEX10. Interacts with SPAG9. The heterodimer MYC:MAX interacts with ABI1; the interaction may enhance MYC:MAX transcriptional activity. Post-translationally, phosphorylated.

The protein localises to the nucleus. Its subcellular location is the cell projection. It is found in the dendrite. Transcription regulator. Forms a sequence-specific DNA-binding protein complex with MYC or MAD which recognizes the core sequence 5'-CAC[GA]TG-3'. The MYC:MAX complex is a transcriptional activator, whereas the MAD:MAX complex is a repressor. May repress transcription via the recruitment of a chromatin remodeling complex containing H3 'Lys-9' histone methyltransferase activity. Represses MYC transcriptional activity from E-box elements. The protein is Protein max of Rattus norvegicus (Rat).